A 558-amino-acid chain; its full sequence is Zeta-carotene desaturase, chloroplastic/chromoplastic (558 aa).

The N-terminal 27 residues, 1–27, are a transit peptide targeting the chloroplast and chromoplast; sequence MASSVVFAATGSLSVPPLKSRRFYVNS.

It belongs to the zeta carotene desaturase family. Requires decylplastoquinone as cofactor. 6-decylubiquinone serves as cofactor. Highly expressed in leaves. Expressed at low levels in flowers and siliques.

It is found in the plastid. The protein localises to the chloroplast. The protein resides in the chromoplast. The enzyme catalyses 9,9'-di-cis-zeta-carotene + 2 a quinone = 7,7',9,9'-tetra-cis-lycopene + 2 a quinol. It functions in the pathway carotenoid biosynthesis; lycopene biosynthesis. Plays a crucial role in plant growth and development. Is essential for the biosynthesis of carotenoids. Carotenoids are involved in different physiological processes, including coloration, photoprotection, biosynthesis of abscisic acid (ABA) and chloroplast biogenesis. Catalyzes the conversion of zeta-carotene to lycopene via the intermediary of neurosporene. It carries out two consecutive desaturations (introduction of double bonds) at positions C-7 and C-7'. Shows stereoselectivity toward trans C15-C15'zeta-carotene double bond. The zeta-carotene produced by the phytoene desaturase PDS has a C15-C15' double bond in the cis configuration and it requires isomerization before being recognized as substrate by ZDS. The main product is 7,9,7',9'-tetra-cis-lycopene (pro-lycopene). The polypeptide is Zeta-carotene desaturase, chloroplastic/chromoplastic (Arabidopsis thaliana (Mouse-ear cress)).